The following is a 177-amino-acid chain: Embryogenesis-like protein (177 aa).

The stretch at 98–118 (VDEINLKFAEAREEIEMAMDA) forms a coiled coil.

As to quaternary structure, interacts with HAG1/GCN5. As to expression, expressed in flowers, leaves, stems and siliques.

The protein localises to the nucleus. Functionally, activates gene expression by recruiting HAG1/GCN5 and triggering subsequent histone H3 acetylation of target genes promoters. The protein is Embryogenesis-like protein of Arabidopsis thaliana (Mouse-ear cress).